The following is a 158-amino-acid chain: UPF0260 protein RHECIAT_CH0001358 (158 aa).

Belongs to the UPF0260 family.

This Rhizobium etli (strain CIAT 652) protein is UPF0260 protein RHECIAT_CH0001358.